We begin with the raw amino-acid sequence, 122 residues long: Large ribosomal subunit protein uL14 (122 aa).

Belongs to the universal ribosomal protein uL14 family. Part of the 50S ribosomal subunit. Forms a cluster with proteins L3 and L19. In the 70S ribosome, L14 and L19 interact and together make contacts with the 16S rRNA in bridges B5 and B8.

Binds to 23S rRNA. Forms part of two intersubunit bridges in the 70S ribosome. In Rickettsia rickettsii (strain Iowa), this protein is Large ribosomal subunit protein uL14.